Consider the following 312-residue polypeptide: Transcription initiation factor IIB-2 (312 aa).

The TFIIB-type zinc-finger motif lies at 2 to 34 (SDAFCSDCKRHTEVVFDHSAGDTVCSECGLVLE). The Zn(2+) site is built by cysteine 6, cysteine 9, cysteine 26, and cysteine 29. A run of 2 repeats spans residues 115 to 192 (MADR…YIVK) and 216 to 290 (FCSN…DLYP).

This sequence belongs to the TFIIB family. As to quaternary structure, associates with TFIID-IIA (DA complex) to form TFIID-IIA-IIB (DAB-complex) which is then recognized by polymerase II.

It is found in the nucleus. Functionally, general factor that plays a major role in the activation of eukaryotic genes transcribed by RNA polymerase II. This Arabidopsis thaliana (Mouse-ear cress) protein is Transcription initiation factor IIB-2 (TFIIB2).